A 419-amino-acid chain; its full sequence is AT-hook motif nuclear-localized protein 4 (419 aa).

Disordered regions lie at residues 1–168, 301–337, and 382–419; these read MEER…SGGG, QQQQ…DPKA, and DLFS…EVPS. Residues 78 to 86 carry the Bipartite nuclear localization signal motif; the sequence is KKKRGRPRK. The a.T hook DNA-binding region spans 78–90; sequence KKKRGRPRKYNPD. Polar residues predominate over residues 101 to 112; the sequence is PISSSVPLTSEF. Basic residues predominate over residues 115-130; the sequence is RKRGRGRGRGRGRGRG. Positions 136–148 are enriched in low complexity; it reads GSREPNNNNNDNN. A PPC domain is found at 174–314; that stretch reads VSPSFTPHVL…QQIKKQRRER (141 aa). A compositionally biased stretch (polar residues) spans 318–328; the sequence is PTTTQASNISF. Residues 391-406 are compositionally biased toward acidic residues; the sequence is DREEDEDDLEGEDDEE.

Homodimer. Interacts with AHL3. In terms of tissue distribution, predominantly expressed in the stele of the root meristem with a specificity to the procambium.

It is found in the nucleus. Its function is as follows. Transcription factor that specifically binds AT-rich DNA sequences related to the nuclear matrix attachment regions (MARs). Acts redundantly with AHL3 to regulate the formation of tissue boundary between the xylem and procambium in the root meristem. Cell-to-cell movement of AHL4 from the procambium to the xylem is critical for its function in root vascular patterning. This chain is AT-hook motif nuclear-localized protein 4, found in Arabidopsis thaliana (Mouse-ear cress).